A 411-amino-acid polypeptide reads, in one-letter code: UPF0754 membrane protein Npun_R4433 (411 aa).

A run of 2 helical transmembrane segments spans residues 3 to 23 (WSHL…GYFT) and 387 to 407 (IVTL…VFLV).

The protein belongs to the UPF0754 family.

Its subcellular location is the cell inner membrane. This Nostoc punctiforme (strain ATCC 29133 / PCC 73102) protein is UPF0754 membrane protein Npun_R4433.